A 255-amino-acid polypeptide reads, in one-letter code: Small ribosomal subunit protein uS2 (255 aa).

This sequence belongs to the universal ribosomal protein uS2 family.

The chain is Small ribosomal subunit protein uS2 from Streptococcus pyogenes serotype M28 (strain MGAS6180).